We begin with the raw amino-acid sequence, 89 residues long: Signal recognition particle 19 kDa protein (89 aa).

The protein belongs to the SRP19 family. Part of the signal recognition particle protein translocation system, which is composed of SRP and FtsY. Archaeal SRP consists of a 7S RNA molecule of 300 nucleotides and two protein subunits: SRP54 and SRP19.

The protein localises to the cytoplasm. Functionally, involved in targeting and insertion of nascent membrane proteins into the cytoplasmic membrane. Binds directly to 7S RNA and mediates binding of the 54 kDa subunit of the SRP. This is Signal recognition particle 19 kDa protein from Methanobrevibacter smithii (strain ATCC 35061 / DSM 861 / OCM 144 / PS).